The following is a 388-amino-acid chain: bZIP transcription factor 1-D (388 aa).

Disordered stretches follow at residues 1 to 49 (MGSS…PIPP), 103 to 249 (FAPY…GPTT), 261 to 316 (TASS…RKQA), and 348 to 388 (ELLS…KDTN). Composition is skewed to low complexity over residues 23 to 33 (PPATSSTATPT) and 117 to 129 (AAGT…TAGG). A compositionally biased stretch (polar residues) spans 169–179 (SGASANGTISQ). Positions 180–193 (SGESGSESSSEGSE) are enriched in low complexity. The segment covering 214–231 (RSSQNGVSPSPSQAQLKQ) has biased composition (polar residues). The 64-residue stretch at 293 to 356 (ELKRQKRKQS…DELLSKNSSL (64 aa)) folds into the bZIP domain. The basic motif stretch occupies residues 295–314 (KRQKRKQSNRDSARRSRLRK). Over residues 302–316 (SNRDSARRSRLRKQA) the composition is skewed to basic and acidic residues. The segment at 321 to 356 (LAQRAEVLKQENASLKDEVSRIRKEYDELLSKNSSL) is leucine-zipper. 2 stretches are compositionally biased toward basic and acidic residues: residues 359–369 (NVGDKQHKTDE) and 375–388 (KLQH…KDTN).

This sequence belongs to the bZIP family. Highly expressed in roots and at lower levels in stems and leaves.

The protein resides in the nucleus. In terms of biological role, probable transcription factor that may be involved in responses to fungal pathogen infection and abiotic stresses. The chain is bZIP transcription factor 1-D from Triticum aestivum (Wheat).